A 241-amino-acid polypeptide reads, in one-letter code: Adenosylcobinamide-GDP ribazoletransferase (241 aa).

7 helical membrane-spanning segments follow: residues 34-54 (RIPA…FTGS), 55-75 (FLSL…GFYL), 109-129 (VGPF…ELIT), 133-153 (PVAF…VLVF), 165-185 (MLFP…LPLL), 186-206 (LIDV…GFLI), and 221-241 (VLGG…NYLI).

This sequence belongs to the CobS family. Requires Mg(2+) as cofactor.

Its subcellular location is the cell inner membrane. It catalyses the reaction alpha-ribazole + adenosylcob(III)inamide-GDP = adenosylcob(III)alamin + GMP + H(+). It carries out the reaction alpha-ribazole 5'-phosphate + adenosylcob(III)inamide-GDP = adenosylcob(III)alamin 5'-phosphate + GMP + H(+). Its pathway is cofactor biosynthesis; adenosylcobalamin biosynthesis; adenosylcobalamin from cob(II)yrinate a,c-diamide: step 7/7. Joins adenosylcobinamide-GDP and alpha-ribazole to generate adenosylcobalamin (Ado-cobalamin). Also synthesizes adenosylcobalamin 5'-phosphate from adenosylcobinamide-GDP and alpha-ribazole 5'-phosphate. The sequence is that of Adenosylcobinamide-GDP ribazoletransferase from Fervidobacterium nodosum (strain ATCC 35602 / DSM 5306 / Rt17-B1).